Here is an 879-residue protein sequence, read N- to C-terminus: Phosphoenolpyruvate carboxylase (879 aa).

Active-site residues include His141 and Lys546.

Belongs to the PEPCase type 1 family. Requires Mg(2+) as cofactor.

The catalysed reaction is oxaloacetate + phosphate = phosphoenolpyruvate + hydrogencarbonate. Its function is as follows. Forms oxaloacetate, a four-carbon dicarboxylic acid source for the tricarboxylic acid cycle. This is Phosphoenolpyruvate carboxylase from Stutzerimonas stutzeri (strain A1501) (Pseudomonas stutzeri).